We begin with the raw amino-acid sequence, 116 residues long: Iron-sulfur cluster insertion protein ErpA (116 aa).

3 residues coordinate iron-sulfur cluster: Cys44, Cys108, and Cys110.

Belongs to the HesB/IscA family. Homodimer. Requires iron-sulfur cluster as cofactor.

In terms of biological role, required for insertion of 4Fe-4S clusters for at least IspG. The sequence is that of Iron-sulfur cluster insertion protein ErpA from Pseudomonas aeruginosa (strain LESB58).